Here is a 99-residue protein sequence, read N- to C-terminus: MELAVVGSSEFVTGFRLAGIKKIYEAKSDELESVVTKVLKDSDVGIFVIHEDDFNKLPEILRDTLSESVDPTVVTLGGTGESSNLREKIKQSVGVDLWK.

The protein belongs to the V-ATPase F subunit family. Has multiple subunits with at least A(3), B(3), C, D, E, F, H, I and proteolipid K(x).

The protein resides in the cell membrane. Functionally, component of the A-type ATP synthase that produces ATP from ADP in the presence of a proton gradient across the membrane. The sequence is that of A-type ATP synthase subunit F from Methanococcoides burtonii (strain DSM 6242 / NBRC 107633 / OCM 468 / ACE-M).